The sequence spans 384 residues: Dual specificity protein phosphatase 5 (384 aa).

In terms of domain architecture, Rhodanese spans 19 to 141; that stretch reads AEARCVVLDC…FYSQYPECCV (123 aa). The Nuclear localization signal motif lies at 53–74; it reads RRARGGAVSARYVLADEAARAR. Residues 178–319 form the Tyrosine-protein phosphatase domain; sequence GPVEILPFLY…LLQYESEILP (142 aa). The Phosphocysteine intermediate role is filled by cysteine 263.

It belongs to the protein-tyrosine phosphatase family. Non-receptor class dual specificity subfamily.

Its subcellular location is the nucleus. The catalysed reaction is O-phospho-L-tyrosyl-[protein] + H2O = L-tyrosyl-[protein] + phosphate. The enzyme catalyses O-phospho-L-seryl-[protein] + H2O = L-seryl-[protein] + phosphate. It carries out the reaction O-phospho-L-threonyl-[protein] + H2O = L-threonyl-[protein] + phosphate. Its function is as follows. Dual specificity protein phosphatase; active with phosphotyrosine, phosphoserine and phosphothreonine residues. The highest relative activity is toward ERK1. This is Dual specificity protein phosphatase 5 (Dusp5) from Rattus norvegicus (Rat).